Consider the following 198-residue polypeptide: Transmembrane gamma-carboxyglutamic acid protein 2 (198 aa).

The first 17 residues, 1–17, serve as a signal peptide directing secretion; it reads MRGRPSLLLVYMGLATC. Residues 18-51 constitute a propeptide that is removed on maturation; the sequence is LDTSPHREQNQVLDIFLDAPEAQSFLVGRRRFPR. The Gla domain occupies 52–98; the sequence is ANHWDLELLTPGNLERECLEERCSWEEAREYFEDNTLTERFWESYTY. Residues 52 to 111 are Extracellular-facing; it reads ANHWDLELLTPGNLERECLEERCSWEEAREYFEDNTLTERFWESYTYNGKGGRGRVDVAG. Cys-69 and Cys-74 are disulfide-bonded. Glu-72 is subject to 4-carboxyglutamate. The chain crosses the membrane as a helical span at residues 112 to 132; it reads LAVGLTSGILLIVLAGLGAFW. Topologically, residues 133–198 are cytoplasmic; that stretch reads YLHYRRRRLR…PPYSSLRRPH (66 aa). The interval 156 to 198 is disordered; that stretch reads PLSPQTPQSPPLPPGLPTYEQALAASGVHDAPPPPYSSLRRPH. The segment covering 162–171 has biased composition (pro residues); the sequence is PQSPPLPPGL. Residues 171–174 carry the LPXY motif; mediates binding to WW domain-containing proteins motif; sequence LPTY. The short motif at 188–191 is the PPXY motif; mediates binding to WW domain-containing proteins element; the sequence is PPPY.

In terms of assembly, interacts with NEDD4. Interacts with transcriptional coactivator YAP1. Gamma-carboxyglutamate residues are formed by vitamin K dependent carboxylation. These residues are essential for the binding of calcium.

Its subcellular location is the cell membrane. In Mus musculus (Mouse), this protein is Transmembrane gamma-carboxyglutamic acid protein 2 (Prrg2).